Here is a 203-residue protein sequence, read N- to C-terminus: uncharacterized protein (203 aa).

4 helical membrane-spanning segments follow: residues 9–29 (YNVF…IVVA), 42–62 (FLFL…FFDV), 86–106 (SGVF…ALLV), and 126–146 (YPLL…SIGL). Basic and acidic residues-rich tracts occupy residues 164–174 (GEPTAADKTDS) and 182–191 (DQTKSKKDGD). A disordered region spans residues 164 to 203 (GEPTAADKTDSRPVVVDLDQTKSKKDGDNPPQASGDMTSL). Polar residues predominate over residues 194 to 203 (PQASGDMTSL).

It localises to the cell membrane. This is an uncharacterized protein from Mycoplasma pneumoniae (strain ATCC 29342 / M129 / Subtype 1) (Mycoplasmoides pneumoniae).